The following is a 491-amino-acid chain: Arginine decarboxylase (491 aa).

Lys227 is subject to N6-(pyridoxal phosphate)lysine.

This sequence belongs to the Orn/Lys/Arg decarboxylase class-I family. Pyridoxal 5'-phosphate serves as cofactor.

The protein localises to the cytoplasm. The enzyme catalyses L-arginine + H(+) = agmatine + CO2. It functions in the pathway amine and polyamine biosynthesis; agmatine biosynthesis; agmatine from L-arginine: step 1/1. Functionally, catalyzes the formation of agmatine from arginine. In Halalkalibacterium halodurans (strain ATCC BAA-125 / DSM 18197 / FERM 7344 / JCM 9153 / C-125) (Bacillus halodurans), this protein is Arginine decarboxylase (speA).